Reading from the N-terminus, the 710-residue chain is Polyribonucleotide nucleotidyltransferase (710 aa).

The Mg(2+) site is built by D489 and D495. A KH domain is found at 556-615 (PKIDTIKIDVDKIKVVIGKGGETIDKIIAETGVKIDIDDEGNVSIYSSDQAAINRTKEII). An S1 motif domain is found at 625 to 693 (GEVYHAKVVR…EKGRVDASMK (69 aa)). Residues 691–710 (SMKALIPRPPKPEKKEEKHD) are disordered. Over residues 700–710 (PKPEKKEEKHD) the composition is skewed to basic and acidic residues.

It belongs to the polyribonucleotide nucleotidyltransferase family. Mg(2+) is required as a cofactor.

The protein resides in the cytoplasm. It catalyses the reaction RNA(n+1) + phosphate = RNA(n) + a ribonucleoside 5'-diphosphate. In terms of biological role, involved in mRNA degradation. Catalyzes the phosphorolysis of single-stranded polyribonucleotides processively in the 3'- to 5'-direction. In Streptococcus pyogenes serotype M2 (strain MGAS10270), this protein is Polyribonucleotide nucleotidyltransferase.